Reading from the N-terminus, the 162-residue chain is Caveolin-2 (162 aa).

Residues 1–86 are Cytoplasmic-facing; it reads MGLETEKADV…FEISKYVIYK (86 aa). Tyr19 bears the Phosphotyrosine; by SRC mark. 2 positions are modified to phosphoserine: Ser20 and Ser23. Tyr27 bears the Phosphotyrosine; by SRC mark. Residues 87–107 constitute an intramembrane region (helical); the sequence is FLTVFLAIPLAFVAGILFATL. Residues 108 to 162 are Cytoplasmic-facing; the sequence is SCLHIWIIMPFVKTCLMLLPSVQTIWKSVTDVVIAPLCTSAGRSFSSVSLQLSHD.

This sequence belongs to the caveolin family. As to quaternary structure, monomer or homodimer. Interacts with CAV1; the interaction forms a stable heterooligomeric complex that is required for targeting to lipid rafts and for caveolae formation. Tyrosine phosphorylated forms do not form heterooligomers with the Tyr-19-phosphorylated form existing as a monomer or dimer, and the Tyr-27-form as a monomer only. Interacts (tyrosine phosphorylated form) with the SH2 domain-containing proteins, RASA1, NCK1 and SRC. Interacts (tyrosine phosphorylated form) with INSR, the interaction (Tyr-27-phosphorylated form) is increased on insulin stimulation. Interacts (Tyr-19 phosphorylated form) with MAPK1 (phosphorylated form); the interaction, promoted by insulin, leads to nuclear location and MAPK1 activation. Interacts with STAT3; the interaction is increased on insulin-induced tyrosine phosphorylation leading to STAT activation. In terms of processing, phosphorylated on serine and tyrosine residues. CAV1 promotes phosphorylation on Ser-23 which then targets the complex to the plasma membrane, lipid rafts and caveolae. Phosphorylation on both Tyr-19 and Tyr-27 is required for insulin-induced 'Ser-727' phosphorylation of STAT3 and its activation. Phosphorylation on Tyr-19 is required for insulin-induced phosphorylation of MAPK1 and DNA binding of STAT3. Tyrosine phosphorylation is induced by both EGF and insulin.

It is found in the nucleus. The protein localises to the cytoplasm. Its subcellular location is the golgi apparatus membrane. It localises to the cell membrane. The protein resides in the membrane. It is found in the caveola. Its function is as follows. May act as a scaffolding protein within caveolar membranes. Interacts directly with G-protein alpha subunits and can functionally regulate their activity. Acts as an accessory protein in conjunction with CAV1 in targeting to lipid rafts and driving caveolae formation. Positive regulator of cellular mitogenesis of the MAPK signaling pathway. Required for the insulin-stimulated nuclear translocation and activation of MAPK1 and STAT3, and the subsequent regulation of cell cycle progression. The chain is Caveolin-2 (CAV2) from Equus caballus (Horse).